Here is a 632-residue protein sequence, read N- to C-terminus: 2-hydroxyacyl-CoA lyase 2 (632 aa).

The helical transmembrane segment at 10 to 30 threads the bilayer; the sequence is AWGFFSSFLLLAFGTLVAALL. Position 98 (Glu-98) interacts with thiamine diphosphate. Residues 470–550 are thiamine pyrophosphate binding; the sequence is DFVGTAAYLV…VMALIGNDAG (81 aa). Positions 521 and 547 each coordinate Mg(2+).

Belongs to the TPP enzyme family. The cofactor is Mg(2+). It depends on thiamine diphosphate as a cofactor.

The protein resides in the endoplasmic reticulum membrane. The catalysed reaction is 2-hydroxyoctadecanoyl-CoA = heptadecanal + formyl-CoA. It carries out the reaction (2R)-hydroxyhexadecanoyl-CoA = pentadecanal + formyl-CoA. Its function is as follows. Endoplasmic reticulum 2-OH acyl-CoA lyase involved in the cleavage (C1 removal) reaction in the fatty acid alpha-oxydation in a thiamine pyrophosphate (TPP)-dependent manner. Involved in the phytosphingosine degradation pathway. This is 2-hydroxyacyl-CoA lyase 2 (ILVBL) from Bos taurus (Bovine).